A 157-amino-acid polypeptide reads, in one-letter code: Cyclic pyranopterin monophosphate synthase (157 aa).

Residues 74-76 (MCH) and 112-113 (ME) each bind substrate. The active site involves Asp127.

It belongs to the MoaC family. In terms of assembly, homohexamer; trimer of dimers.

It carries out the reaction (8S)-3',8-cyclo-7,8-dihydroguanosine 5'-triphosphate = cyclic pyranopterin phosphate + diphosphate. Its pathway is cofactor biosynthesis; molybdopterin biosynthesis. Its function is as follows. Catalyzes the conversion of (8S)-3',8-cyclo-7,8-dihydroguanosine 5'-triphosphate to cyclic pyranopterin monophosphate (cPMP). In Campylobacter jejuni subsp. doylei (strain ATCC BAA-1458 / RM4099 / 269.97), this protein is Cyclic pyranopterin monophosphate synthase.